A 441-amino-acid chain; its full sequence is uncharacterized protein (441 aa).

An ATP-binding site is contributed by 217–224 (GETGTGKT).

Belongs to the GSP E family.

This is an uncharacterized protein from Bacillus anthracis.